The primary structure comprises 657 residues: Folic acid synthesis protein FOL1 (657 aa).

The tract at residues Met-1–Leu-116 is DHNA. An HPPK region spans residues Tyr-149 to Ala-274. Residues Thr-333–Leu-641 enclose the Pterin-binding domain. Positions Ile-335 to Lys-657 are DHPS. Residue Asn-340 participates in Mg(2+) binding. 3 residues coordinate (7,8-dihydropterin-6-yl)methyl diphosphate: Thr-380, Asp-416, and Asn-435. Residues Leu-466–Ile-524 are disordered. The segment covering Asn-467–Asn-509 has biased composition (low complexity). A compositionally biased stretch (basic and acidic residues) spans Asn-514 to Ile-524. (7,8-dihydropterin-6-yl)methyl diphosphate contacts are provided by residues Asp-547, Lys-583, and Arg-629 to His-631.

It in the N-terminal section; belongs to the DHNA family. The protein in the central section; belongs to the HPPK family. This sequence in the C-terminal section; belongs to the DHPS family. Mg(2+) serves as cofactor.

It catalyses the reaction 7,8-dihydroneopterin = 6-hydroxymethyl-7,8-dihydropterin + glycolaldehyde. The enzyme catalyses 6-hydroxymethyl-7,8-dihydropterin + ATP = (7,8-dihydropterin-6-yl)methyl diphosphate + AMP + H(+). The catalysed reaction is (7,8-dihydropterin-6-yl)methyl diphosphate + 4-aminobenzoate = 7,8-dihydropteroate + diphosphate. Its pathway is cofactor biosynthesis; tetrahydrofolate biosynthesis; 2-amino-4-hydroxy-6-hydroxymethyl-7,8-dihydropteridine diphosphate from 7,8-dihydroneopterin triphosphate: step 3/4. It functions in the pathway cofactor biosynthesis; tetrahydrofolate biosynthesis; 2-amino-4-hydroxy-6-hydroxymethyl-7,8-dihydropteridine diphosphate from 7,8-dihydroneopterin triphosphate: step 4/4. It participates in cofactor biosynthesis; tetrahydrofolate biosynthesis; 7,8-dihydrofolate from 2-amino-4-hydroxy-6-hydroxymethyl-7,8-dihydropteridine diphosphate and 4-aminobenzoate: step 1/2. Its function is as follows. Catalyzes three sequential steps of tetrahydrofolate biosynthesis. The protein is Folic acid synthesis protein FOL1 (fol1) of Dictyostelium discoideum (Social amoeba).